Reading from the N-terminus, the 89-residue chain is Small ribosomal subunit protein uS15 (89 aa).

Belongs to the universal ribosomal protein uS15 family. In terms of assembly, part of the 30S ribosomal subunit. Forms a bridge to the 50S subunit in the 70S ribosome, contacting the 23S rRNA.

Functionally, one of the primary rRNA binding proteins, it binds directly to 16S rRNA where it helps nucleate assembly of the platform of the 30S subunit by binding and bridging several RNA helices of the 16S rRNA. Forms an intersubunit bridge (bridge B4) with the 23S rRNA of the 50S subunit in the ribosome. The sequence is that of Small ribosomal subunit protein uS15 from Chlorobium luteolum (strain DSM 273 / BCRC 81028 / 2530) (Pelodictyon luteolum).